We begin with the raw amino-acid sequence, 212 residues long: Fe/S biogenesis protein NfuA (212 aa).

The [4Fe-4S] cluster site is built by Cys169 and Cys172.

The protein belongs to the NfuA family. In terms of assembly, homodimer. Requires [4Fe-4S] cluster as cofactor.

Functionally, involved in iron-sulfur cluster biogenesis. Binds a 4Fe-4S cluster, can transfer this cluster to apoproteins, and thereby intervenes in the maturation of Fe/S proteins. Could also act as a scaffold/chaperone for damaged Fe/S proteins. The polypeptide is Fe/S biogenesis protein NfuA (Acinetobacter baumannii (strain AB307-0294)).